Reading from the N-terminus, the 289-residue chain is 4-diphosphocytidyl-2-C-methyl-D-erythritol kinase (289 aa).

The active site involves K10. Residue 94–104 (PVAAGLAGGSS) coordinates ATP. D136 is an active-site residue.

It belongs to the GHMP kinase family. IspE subfamily.

The catalysed reaction is 4-CDP-2-C-methyl-D-erythritol + ATP = 4-CDP-2-C-methyl-D-erythritol 2-phosphate + ADP + H(+). It functions in the pathway isoprenoid biosynthesis; isopentenyl diphosphate biosynthesis via DXP pathway; isopentenyl diphosphate from 1-deoxy-D-xylulose 5-phosphate: step 3/6. Functionally, catalyzes the phosphorylation of the position 2 hydroxy group of 4-diphosphocytidyl-2C-methyl-D-erythritol. The protein is 4-diphosphocytidyl-2-C-methyl-D-erythritol kinase (ispE) of Bacillus subtilis (strain 168).